Reading from the N-terminus, the 193-residue chain is MNLVPTVIEQTNRGERAYDIYSRLLKDRIILLGSGIDDNVSNSIVAQLLFLEAEDPDKDISLYINSPGGSITAGMAIYDTMNFIKPNVSTICIGMAASMGAFLLTAGEKGKRFALPNSEIMIHQPLGGTQGQATDIEIHAKRIIDIKRRMNEIMAEKTGQPIEVIERDTERDNFMTADQSVEYGLIDKILERK.

The Nucleophile role is filled by Ser-98. His-123 is an active-site residue.

It belongs to the peptidase S14 family. As to quaternary structure, fourteen ClpP subunits assemble into 2 heptameric rings which stack back to back to give a disk-like structure with a central cavity, resembling the structure of eukaryotic proteasomes.

It is found in the cytoplasm. It carries out the reaction Hydrolysis of proteins to small peptides in the presence of ATP and magnesium. alpha-casein is the usual test substrate. In the absence of ATP, only oligopeptides shorter than five residues are hydrolyzed (such as succinyl-Leu-Tyr-|-NHMec, and Leu-Tyr-Leu-|-Tyr-Trp, in which cleavage of the -Tyr-|-Leu- and -Tyr-|-Trp bonds also occurs).. Its function is as follows. Cleaves peptides in various proteins in a process that requires ATP hydrolysis. Has a chymotrypsin-like activity. Plays a major role in the degradation of misfolded proteins. ClpXP is involved in the complete degradation of the Site-2 clipped anti-sigma-W factor RsiW. This results in the release of SigW and the transcription activation of the genes under the control of the sigma-W factor. This is ATP-dependent Clp protease proteolytic subunit from Oceanobacillus iheyensis (strain DSM 14371 / CIP 107618 / JCM 11309 / KCTC 3954 / HTE831).